We begin with the raw amino-acid sequence, 314 residues long: Methionyl-tRNA formyltransferase (314 aa).

Residue 111–114 (SLLP) participates in (6S)-5,6,7,8-tetrahydrofolate binding.

This sequence belongs to the Fmt family.

It catalyses the reaction L-methionyl-tRNA(fMet) + (6R)-10-formyltetrahydrofolate = N-formyl-L-methionyl-tRNA(fMet) + (6S)-5,6,7,8-tetrahydrofolate + H(+). Functionally, attaches a formyl group to the free amino group of methionyl-tRNA(fMet). The formyl group appears to play a dual role in the initiator identity of N-formylmethionyl-tRNA by promoting its recognition by IF2 and preventing the misappropriation of this tRNA by the elongation apparatus. This is Methionyl-tRNA formyltransferase from Coxiella burnetii (strain CbuK_Q154) (Coxiella burnetii (strain Q154)).